Here is a 218-residue protein sequence, read N- to C-terminus: Glutathione S-transferase Mu 2 (218 aa).

The region spanning 2–88 (PIILGYWNIR…YIARKHNLCG (87 aa)) is the GST N-terminal domain. Glutathione is bound at residue 7–8 (YW). Phosphoserine is present on residues S27 and S44. Residues 43–46 (RSQW), K50, 59–60 (NL), and 72–73 (QS) each bind glutathione. The region spanning 90–208 (TEKEKIQEDI…KSSRFLPRPV (119 aa)) is the GST C-terminal domain. Y116 provides a ligand contact to substrate.

Belongs to the GST superfamily. Mu family. Homodimer.

The protein resides in the cytoplasm. The catalysed reaction is RX + glutathione = an S-substituted glutathione + a halide anion + H(+). It carries out the reaction 11(S)-hydroxy-14(S),15(S)-epoxy-(5Z,8Z,12E)-eicosatrienoate + glutathione = (11S,15S)-dihydroxy-14(R)-S-glutathionyl-(5Z,8Z,12E)-eicosatrienoate. In terms of biological role, conjugation of reduced glutathione to a wide number of exogenous and endogenous hydrophobic electrophiles. Participates in the formation of novel hepoxilin regioisomers. The protein is Glutathione S-transferase Mu 2 (GSTM2) of Pongo abelii (Sumatran orangutan).